The chain runs to 239 residues: UPF0173 metal-dependent hydrolase Dvul_0081 (239 aa).

Belongs to the UPF0173 family.

The chain is UPF0173 metal-dependent hydrolase Dvul_0081 from Nitratidesulfovibrio vulgaris (strain DP4) (Desulfovibrio vulgaris).